The following is a 334-amino-acid chain: Malate dehydrogenase, mitochondrial (334 aa).

Residues 1–17 constitute a mitochondrion transit peptide; that stretch reads MLSRVAKRAFSSTVANP. Residues 24–30 and Asp-50 contribute to the NAD(+) site; that span reads GAGGGIG. Substrate is bound by residues Arg-99 and Arg-105. Residues Asn-112 and 135–137 contribute to the NAD(+) site; that span reads ISN. 2 residues coordinate substrate: Asn-137 and Arg-171. Phosphoserine is present on Ser-177. The active-site Proton acceptor is the His-195. Thr-199 carries the post-translational modification Phosphothreonine. Met-245 serves as a coordination point for NAD(+).

It belongs to the LDH/MDH superfamily. MDH type 1 family. Homodimer.

It localises to the mitochondrion matrix. It carries out the reaction (S)-malate + NAD(+) = oxaloacetate + NADH + H(+). The chain is Malate dehydrogenase, mitochondrial (MDH1) from Saccharomyces cerevisiae (strain ATCC 204508 / S288c) (Baker's yeast).